The following is a 208-amino-acid chain: Small ribosomal subunit protein uS4 (208 aa).

The disordered stretch occupies residues 30 to 51 (KSSLEKRPYAPGQHGQRRSKIS). The 64-residue stretch at 98–161 (RRLDNVVYRM…KNNPQVQRSI (64 aa)) folds into the S4 RNA-binding domain.

This sequence belongs to the universal ribosomal protein uS4 family. As to quaternary structure, part of the 30S ribosomal subunit. Contacts protein S5. The interaction surface between S4 and S5 is involved in control of translational fidelity.

In terms of biological role, one of the primary rRNA binding proteins, it binds directly to 16S rRNA where it nucleates assembly of the body of the 30S subunit. With S5 and S12 plays an important role in translational accuracy. The sequence is that of Small ribosomal subunit protein uS4 from Wolinella succinogenes (strain ATCC 29543 / DSM 1740 / CCUG 13145 / JCM 31913 / LMG 7466 / NCTC 11488 / FDC 602W) (Vibrio succinogenes).